The chain runs to 228 residues: Vesicle transport protein SEC20 (228 aa).

Over 1–199 the chain is Cytoplasmic; sequence MAAPQDVHVR…LITKYNRREL (199 aa). Residues 37-90 adopt a coiled-coil conformation; it reads LSELTELNTKVKEKFQQLKHRIQELEQSAKEQDKESEKQLLLQEVENHKKQMLS. Residues 200-220 traverse the membrane as a helical; Anchor for type IV membrane protein segment; it reads TDKLLIFLALALFLATVLYIV. Over 221 to 228 the chain is Lumenal; that stretch reads KKRLFPFL.

The protein belongs to the SEC20 family. As to quaternary structure, component of a SNARE complex consisting of STX18, USE1L, BNIP1/SEC20L and SEC22B. Interacts directly with STX18, RINT1/TIP20L and NAPA. Interacts with ZW10 through RINT1. Interacts with BCL2. Interacts with RNF186. Interacts with RNF185. Interacts with SQSTM1; increased by 'Lys-63'-linked polyubiquitination of BNIP1. Post-translationally, polyubiquitinated. 'Lys-63'-linked polyubiquitination by RNF185 increases the interaction with the autophagy receptor SQSTM1. Undergoes 'Lys-29'- and 'Lys-63'-linked polyubiquitination by RNF186 that may regulate BNIP1 localization to the mitochondrion.

Its subcellular location is the endoplasmic reticulum membrane. The protein localises to the mitochondrion membrane. As part of a SNARE complex may be involved in endoplasmic reticulum membranes fusion and be required for the maintenance of endoplasmic reticulum organization. Also plays a role in apoptosis. It is for instance required for endoplasmic reticulum stress-induced apoptosis. As a substrate of RNF185 interacting with SQSTM1, might also be involved in mitochondrial autophagy. This chain is Vesicle transport protein SEC20, found in Rattus norvegicus (Rat).